The chain runs to 188 residues: dCTP deaminase (188 aa).

DCTP-binding positions include Lys-111–Arg-116, Thr-135–Glu-137, Gln-156, Tyr-170, Lys-179, and Gln-180. The active-site Proton donor/acceptor is the Glu-137.

Belongs to the dCTP deaminase family. As to quaternary structure, homotrimer.

The catalysed reaction is dCTP + H2O + H(+) = dUTP + NH4(+). Its pathway is pyrimidine metabolism; dUMP biosynthesis; dUMP from dCTP (dUTP route): step 1/2. Functionally, catalyzes the deamination of dCTP to dUTP. The sequence is that of dCTP deaminase from Rickettsia africae (strain ESF-5).